The sequence spans 313 residues: MNDLPFTLDQLLILKAIAAQGSFKKAADSLYISQPAVSMQVQNIEKQLNVQLLDRGGRRANLTDAGHLLLRYGDRILALCDETCRALEDLRNLQTGTLIIGASQTTGTYLMPQLISLFRKKYPQIMVQLHVDSTRHICWNVANGQIDIAIIGGEVPLELREILQVTPYADDELALILPCSHPFSQRQEIQKEDLYQLHFIALYASSTIRKVVDNILREHDIHSSRFFIEMELNSIEAIKSAVQSELGAAFVSASAITKELQLGLLHWAKIQNVILNRNLSIVTNPNRYRSKAAEKFSCEILASFQPPTVHPCG.

The HTH lysR-type domain occupies 6–63 (FTLDQLLILKAIAAQGSFKKAADSLYISQPAVSMQVQNIEKQLNVQLLDRGGRRANLT). Positions 23-42 (FKKAADSLYISQPAVSMQVQ) form a DNA-binding region, H-T-H motif.

It belongs to the LysR transcriptional regulatory family.

The protein resides in the plastid. Its subcellular location is the chloroplast. In terms of biological role, trans-acting transcriptional regulator of RuBisCO genes (rbcL and rbcS) expression. This chain is Probable RuBisCO transcriptional regulator (rbcR), found in Chlorokybus atmophyticus (Soil alga).